An 859-amino-acid chain; its full sequence is DNA mismatch repair protein MutS (859 aa).

618-625 (GPNMGGKS) is a binding site for ATP. Residues 803–829 (RDHDVQQNTEQQGTQQNMSFVPSAPSP) are disordered. The span at 808–819 (QQNTEQQGTQQN) shows a compositional bias: low complexity.

The protein belongs to the DNA mismatch repair MutS family.

Functionally, this protein is involved in the repair of mismatches in DNA. It is possible that it carries out the mismatch recognition step. This protein has a weak ATPase activity. This is DNA mismatch repair protein MutS from Shewanella pealeana (strain ATCC 700345 / ANG-SQ1).